The sequence spans 68 residues: Large ribosomal subunit protein bL35 (68 aa).

Belongs to the bacterial ribosomal protein bL35 family.

The chain is Large ribosomal subunit protein bL35 from Aster yellows witches'-broom phytoplasma (strain AYWB).